We begin with the raw amino-acid sequence, 484 residues long: ATP synthase subunit beta (484 aa).

The interval 104–123 (ERGPIGSKQTMPIHADAPPF) is disordered. Residue 156–163 (GGAGVGKT) participates in ATP binding.

The protein belongs to the ATPase alpha/beta chains family. F-type ATPases have 2 components, CF(1) - the catalytic core - and CF(0) - the membrane proton channel. CF(1) has five subunits: alpha(3), beta(3), gamma(1), delta(1), epsilon(1). CF(0) has three main subunits: a(1), b(2) and c(9-12). The alpha and beta chains form an alternating ring which encloses part of the gamma chain. CF(1) is attached to CF(0) by a central stalk formed by the gamma and epsilon chains, while a peripheral stalk is formed by the delta and b chains.

The protein localises to the cell inner membrane. The enzyme catalyses ATP + H2O + 4 H(+)(in) = ADP + phosphate + 5 H(+)(out). Produces ATP from ADP in the presence of a proton gradient across the membrane. The catalytic sites are hosted primarily by the beta subunits. This is ATP synthase subunit beta from Zymomonas mobilis subsp. mobilis (strain ATCC 31821 / ZM4 / CP4).